A 370-amino-acid polypeptide reads, in one-letter code: 3-dehydroquinate synthase (370 aa).

NAD(+)-binding positions include 107-111, 131-132, Lys-144, and Lys-153; these read GVIGD and TS. The Zn(2+) site is built by Glu-186, His-249, and His-267.

This sequence belongs to the sugar phosphate cyclases superfamily. Dehydroquinate synthase family. The cofactor is Co(2+). Zn(2+) is required as a cofactor. NAD(+) serves as cofactor.

The protein resides in the cytoplasm. The catalysed reaction is 7-phospho-2-dehydro-3-deoxy-D-arabino-heptonate = 3-dehydroquinate + phosphate. The protein operates within metabolic intermediate biosynthesis; chorismate biosynthesis; chorismate from D-erythrose 4-phosphate and phosphoenolpyruvate: step 2/7. Catalyzes the conversion of 3-deoxy-D-arabino-heptulosonate 7-phosphate (DAHP) to dehydroquinate (DHQ). This is 3-dehydroquinate synthase from Roseobacter denitrificans (strain ATCC 33942 / OCh 114) (Erythrobacter sp. (strain OCh 114)).